The chain runs to 532 residues: Metal-staphylopine-binding protein CntA (532 aa).

Positions 1–20 (MRKLTKMSAMLLASGLILTG) are cleaved as a signal peptide. Residue Cys-21 is the site of N-palmitoyl cysteine attachment. Cys-21 carries the S-diacylglycerol cysteine lipid modification. Staphylopine-binding residues include Arg-165, Arg-418, and Asn-448.

This sequence belongs to the bacterial solute-binding protein 5 family. The complex is composed of two ATP-binding proteins (CntD and CntF), two transmembrane proteins (CntB and CntC) and a solute-binding protein (CntA).

Its subcellular location is the cell membrane. Its function is as follows. Part of the ABC transporter complex CntABCDF (Opp1) involved in the uptake of metal in complex with the metallophore staphylopine (StP). May be involved in the import of a large array of divalent metals ions such as nickel, cobalt, zinc, copper and iron. Binds the metal via the metallophore StP, and transfers the StP-metal complex to the membrane-bound permease. This is Metal-staphylopine-binding protein CntA from Staphylococcus aureus (strain Mu50 / ATCC 700699).